Consider the following 143-residue polypeptide: Large ribosomal subunit protein eL28z (143 aa).

This sequence belongs to the eukaryotic ribosomal protein eL28 family. In terms of assembly, component of the large ribosomal subunit. In terms of tissue distribution, expressed in seedlings, roots, stems, leaves, inflorescences and siliques.

It localises to the cytoplasm. Its subcellular location is the nucleus. The protein resides in the nucleolus. The protein localises to the nucleoplasm. In terms of biological role, component of the large ribosomal subunit. Essential in leaf polarity establishment, probably having a role for translation in leaf dorsoventral patterning to specify leaf adaxial identity. The chain is Large ribosomal subunit protein eL28z from Arabidopsis thaliana (Mouse-ear cress).